A 91-amino-acid chain; its full sequence is MSTFQIHYFASASTYTGRNTESLPAPLPLSSLFDTLEAKYPGIKEKVLSSCSISLGDEYVDLVSDGEKSGNEGLLIQGGDEVAIIPPVSSG.

Residue G91 is modified to 1-thioglycine; alternate. G91 carries the glycyl adenylate; alternate modification.

This sequence belongs to the MoaD family. MOCS2A subfamily. As to quaternary structure, heterotetramer; composed of 2 small (MOCS2A) and 2 large (MOCS2B) subunits. In terms of processing, C-terminal thiocarboxylation occurs in 2 steps, it is first acyl-adenylated (-COAMP) via the hesA/moeB/thiF part of uba4, then thiocarboxylated (-COSH) via the rhodanese domain of uba4.

Its subcellular location is the cytoplasm. It participates in cofactor biosynthesis; molybdopterin biosynthesis. Acts as a sulfur carrier required for molybdopterin biosynthesis. Component of the molybdopterin synthase complex that catalyzes the conversion of precursor Z into molybdopterin by mediating the incorporation of 2 sulfur atoms into precursor Z to generate a dithiolene group. In the complex, serves as sulfur donor by being thiocarboxylated (-COSH) at its C-terminus by uba4. After interaction with MOCS2B, the sulfur is then transferred to precursor Z to form molybdopterin. In Emericella nidulans (strain FGSC A4 / ATCC 38163 / CBS 112.46 / NRRL 194 / M139) (Aspergillus nidulans), this protein is Molybdopterin synthase sulfur carrier subunit.